The chain runs to 304 residues: MRLPIFLDTDPGIDDAVAIAAAIFAPELDLQLMTTVAGNVSVEKTTRNALQLLHFWNAEIPLAQGAAVPLVRAPRDAASVHGESGMAGYDFVEHNRKPLGIPAFLAIRDALMRAPEPVTLVAIGPLTNIALLLSQCPECKPYIRRLVIMGGSAGRGNCTPNAEFNIAADPEAAACVFRSGIEIVMCGLDVTNQAILTPDYLSTLPQLNRTGKMLHALFSHYRSGSMQSGLRMHDLCAIAWLVRPDLFTLKPCFVAVETQGEFTSGTTVVDIDGCLGKPANVQVALDLDVKGFQQWVAEVLALAS.

The active site involves His-233.

It belongs to the IUNH family. RihC subfamily.

Hydrolyzes both purine and pyrimidine ribonucleosides with a broad-substrate specificity. This chain is Non-specific ribonucleoside hydrolase RihC, found in Escherichia coli (strain 55989 / EAEC).